Consider the following 277-residue polypeptide: Adenylate kinase (277 aa).

72–77 (GAGKGT) provides a ligand contact to ATP. Positions 92 to 121 (ATGDMLRSQVAKQTALGVQAKKIMDQGGLV) are NMP. Residues Thr-93, Arg-98, 119–121 (GLV), 148–151 (GFPR), and Gln-155 each bind AMP. The LID stretch occupies residues 189-226 (GRLVHPASGRSYHKLFNPPKVAMTDDVTGDPLVQRSDD). Residues Arg-190 and 199–200 (SY) contribute to the ATP site. The AMP site is built by Arg-223 and Arg-234. Residue Gln-262 participates in ATP binding.

Belongs to the adenylate kinase family. AK2 subfamily. Monomer.

It is found in the cytoplasm. The protein localises to the cytosol. Its subcellular location is the mitochondrion intermembrane space. The catalysed reaction is AMP + ATP = 2 ADP. Functionally, catalyzes the reversible transfer of the terminal phosphate group between ATP and AMP. Plays an important role in cellular energy homeostasis and in adenine nucleotide metabolism. Adenylate kinase activity is critical for regulation of the phosphate utilization and the AMP de novo biosynthesis pathways. This is Adenylate kinase from Eremothecium gossypii (strain ATCC 10895 / CBS 109.51 / FGSC 9923 / NRRL Y-1056) (Yeast).